The following is an 86-amino-acid chain: Small ribosomal subunit protein bS16 (86 aa).

It belongs to the bacterial ribosomal protein bS16 family.

This chain is Small ribosomal subunit protein bS16, found in Stenotrophomonas maltophilia (strain K279a).